A 386-amino-acid polypeptide reads, in one-letter code: Queuine tRNA-ribosyltransferase (386 aa).

The active-site Proton acceptor is aspartate 99. Residues aspartate 99–phenylalanine 103, aspartate 153, glutamine 198, and glycine 225 each bind substrate. Residues glycine 256–aspartate 262 form an RNA binding region. Residue aspartate 275 is the Nucleophile of the active site. The RNA binding; important for wobble base 34 recognition stretch occupies residues threonine 280 to arginine 284. 4 residues coordinate Zn(2+): cysteine 313, cysteine 315, cysteine 318, and histidine 344.

Belongs to the queuine tRNA-ribosyltransferase family. As to quaternary structure, homodimer. Within each dimer, one monomer is responsible for RNA recognition and catalysis, while the other monomer binds to the replacement base PreQ1. Zn(2+) is required as a cofactor.

The enzyme catalyses 7-aminomethyl-7-carbaguanine + guanosine(34) in tRNA = 7-aminomethyl-7-carbaguanosine(34) in tRNA + guanine. Its pathway is tRNA modification; tRNA-queuosine biosynthesis. In terms of biological role, catalyzes the base-exchange of a guanine (G) residue with the queuine precursor 7-aminomethyl-7-deazaguanine (PreQ1) at position 34 (anticodon wobble position) in tRNAs with GU(N) anticodons (tRNA-Asp, -Asn, -His and -Tyr). Catalysis occurs through a double-displacement mechanism. The nucleophile active site attacks the C1' of nucleotide 34 to detach the guanine base from the RNA, forming a covalent enzyme-RNA intermediate. The proton acceptor active site deprotonates the incoming PreQ1, allowing a nucleophilic attack on the C1' of the ribose to form the product. After dissociation, two additional enzymatic reactions on the tRNA convert PreQ1 to queuine (Q), resulting in the hypermodified nucleoside queuosine (7-(((4,5-cis-dihydroxy-2-cyclopenten-1-yl)amino)methyl)-7-deazaguanosine). The sequence is that of Queuine tRNA-ribosyltransferase from Acinetobacter baylyi (strain ATCC 33305 / BD413 / ADP1).